The following is a 908-amino-acid chain: E3 ubiquitin-protein ligase ZNF598 (908 aa).

An RING-type zinc finger spans residues 27–67; that stretch reads CVLCCGDLEATALGRCDHPVCYRCSTKMRVLCEQRYCAVCR. The C2H2-type zinc-finger motif lies at 185 to 208; the sequence is PLCKFCDERYLDNDELLKHLRRDH. Disordered stretches follow at residues 292–338, 350–441, 467–557, 569–619, and 719–744; these read SRRS…KREE, SVAA…EEDF, PGPP…TVQG, SLLA…LEAP, and PSSH…TPGL. Phosphoserine is present on S295. The residue at position 304 (Y304) is a Phosphotyrosine. A compositionally biased stretch (low complexity) spans 313-329; that stretch reads QGRAGRASGRGAQQNRR. Residues 358–385 are compositionally biased toward basic and acidic residues; it reads ETQRVEDREEGSRPKKEEAAARVPEEPR. The residue at position 433 (S433) is a Phosphoserine. Positions 482-501 are enriched in low complexity; it reads PALVSSAPKPSSAPSSLISA. The span at 529–538 shows a compositional bias: basic residues; that stretch reads KAGKGSRGGR.

It belongs to the ZNF598/HEL2 family. As to quaternary structure, interacts with the E2 ubiquitin-conjugating enzyme UBE2D3. Component of the 4EHP-GYF2 complex, at least composed of EIF4E2, GIGYF2 and ZNF598.

It is found in the cytoplasm. The protein resides in the cytosol. The catalysed reaction is S-ubiquitinyl-[E2 ubiquitin-conjugating enzyme]-L-cysteine + [acceptor protein]-L-lysine = [E2 ubiquitin-conjugating enzyme]-L-cysteine + N(6)-ubiquitinyl-[acceptor protein]-L-lysine.. It functions in the pathway protein modification; protein ubiquitination. E3 ubiquitin-protein ligase that plays a key role in the ribosome quality control (RQC), a pathway that takes place when a ribosome has stalled during translation, leading to degradation of nascent peptide chains. ZNF598 is activated when ribosomes are stalled within an mRNA following translation of prematurely polyadenylated mRNAs. Acts as a ribosome collision sensor: specifically recognizes and binds collided di-ribosome, which arises when a trailing ribosome encounters a slower leading ribosome, leading to terminally arrest translation. Following binding to colliding ribosomes, mediates monoubiquitination of 40S ribosomal proteins RPS10/eS10 and RPS3/uS3, and 'Lys-63'-linked polyubiquitination of RPS20/uS10. Polyubiquitination of RPS20/uS10 promotes recruitment of the RQT (ribosome quality control trigger) complex, which drives the disassembly of stalled ribosomes, followed by degradation of nascent peptides. E3 ubiquitin-protein ligase activity is dependent on the E2 ubiquitin-conjugating enzyme UBE2D3. Also acts as an adapter that recruits the 4EHP-GYF2 complex to mRNAs. Independently of its role in RQC, may also act as a negative regulator of interferon-stimulated gene (ISG) expression. The protein is E3 ubiquitin-protein ligase ZNF598 of Mus musculus (Mouse).